Reading from the N-terminus, the 215-residue chain is WAT1-related protein At3g28060 (215 aa).

5 helical membrane-spanning segments follow: residues 48–68, 82–102, 117–137, 146–166, and 176–196; these read IIIGSSGEVFWVEYTLIAVAY, FALALSHNVCVSISCAFVSLF, IMLICIVATGVVNSTSYVVES, VFLAMFRPLSIVTAVVLGAIF, and VIGGTLISIGFSVHNSLFHIA. The EamA domain maps to 65 to 186; the sequence is AVAYIVQTHI…IGGTLISIGF (122 aa).

Belongs to the drug/metabolite transporter (DMT) superfamily. Plant drug/metabolite exporter (P-DME) (TC 2.A.7.4) family.

It is found in the membrane. In Arabidopsis thaliana (Mouse-ear cress), this protein is WAT1-related protein At3g28060.